Consider the following 341-residue polypeptide: L-threonine 3-dehydrogenase (341 aa).

C38 contacts Zn(2+). Active-site charge relay system residues include T40 and H43. Zn(2+) contacts are provided by H63, E64, C93, C96, C99, and C107. Residues I175, D195, R200, L262–I264, and I286–Y287 contribute to the NAD(+) site.

It belongs to the zinc-containing alcohol dehydrogenase family. As to quaternary structure, homotetramer. The cofactor is Zn(2+).

The protein resides in the cytoplasm. The catalysed reaction is L-threonine + NAD(+) = (2S)-2-amino-3-oxobutanoate + NADH + H(+). The protein operates within amino-acid degradation; L-threonine degradation via oxydo-reductase pathway; glycine from L-threonine: step 1/2. Functionally, catalyzes the NAD(+)-dependent oxidation of L-threonine to 2-amino-3-ketobutyrate. The chain is L-threonine 3-dehydrogenase from Chromobacterium violaceum (strain ATCC 12472 / DSM 30191 / JCM 1249 / CCUG 213 / NBRC 12614 / NCIMB 9131 / NCTC 9757 / MK).